The primary structure comprises 269 residues: ATP synthase subunit gamma, mitochondrial (269 aa).

F-type ATP synthases have 2 components, the catalytic core F(1) and the membrane-embedded component F(0), linked together by a central stalk and a peripheral stalk. The central stalk, also called rotor shaft, is often seen as part of F(1). The peripheral stalk is seen as part of F(0). F(0) contains the membrane channel next to the rotor. F-type ATP synthases form dimers but each monomer functions independently in ATP generation. The dimer consists of 18 different polypeptides: ATP1 (subunit alpha, part of F(1), 3 molecules per monomer), ATP2 (subunit beta, part of F(1), 3 molecules per monomer), ATP3 (subunit gamma, part of the central stalk), ATP4 (subunit b, part of the peripheral stalk), ATP5/OSCP (subunit 5/OSCP, part of the peripheral stalk), ATP6 (subunit a, part of the peripheral stalk), ATP7 (subunit d, part of the peripheral stalk), ATP8 (subunit 8, part of the peripheral stalk), OLI1 (subunit c, part of the rotor, 10 molecules per monomer), ATP14 (subunit h, part of the peripheral stalk), ATP15 (subunit epsilon, part of the central stalk), ATP16 (subunit delta, part of the central stalk), ATP17 (subunit f, part of the peripheral stalk), ATP18 (subunit i/j, part of the peripheral stalk). Dimer-specific subunits are ATP19 (subunit k, at interface between monomers), ATP20 (subunit g, at interface between monomers), TIM11 (subunit e, at interface between monomers). Also contains subunit L.

The protein resides in the mitochondrion inner membrane. Its function is as follows. Mitochondrial membrane ATP synthase (F(1)F(0) ATP synthase or Complex V) produces ATP from ADP in the presence of a proton gradient across the membrane which is generated by electron transport complexes of the respiratory chain. F-type ATP synthases consist of two structural domains, F(1) - containing the extramembraneous catalytic core, and F(0) - containing the membrane proton channel, linked together by a central stalk and a peripheral stalk. During catalysis, ATP synthesis in the catalytic domain of F(1) is coupled via a rotary mechanism of the central stalk subunits to proton translocation. Part of the complex F(1) domain and the central stalk which is part of the complex rotary element. The gamma/ATP3 subunit protrudes into the catalytic domain formed of alpha/ATP1(3)beta/ATP2(3). Rotation of the central stalk against the surrounding alpha/ATP1(3)beta/ATP2(3) subunits leads to hydrolysis of ATP in three separate catalytic sites on the beta/ATP2 subunits. The polypeptide is ATP synthase subunit gamma, mitochondrial (Pichia angusta (Yeast)).